The sequence spans 804 residues: Phenylalanine--tRNA ligase beta subunit (804 aa).

Residues 38–148 form the tRNA-binding domain; it reads RSSLKGFVIA…EDAPIGGLFA (111 aa). Residues 401-476 form the B5 domain; that stretch reads PEIKQIAFPF…RIYGLDKIEP (76 aa). The Mg(2+) site is built by Asp-454, Asp-460, Glu-463, and Glu-464. The region spanning 710–803 is the FDX-ACB domain; sequence SPFQMVRRDF…VTKATGAYLR (94 aa).

The protein belongs to the phenylalanyl-tRNA synthetase beta subunit family. Type 1 subfamily. As to quaternary structure, tetramer of two alpha and two beta subunits. The cofactor is Mg(2+).

The protein localises to the cytoplasm. The catalysed reaction is tRNA(Phe) + L-phenylalanine + ATP = L-phenylalanyl-tRNA(Phe) + AMP + diphosphate + H(+). In Bartonella quintana (strain Toulouse) (Rochalimaea quintana), this protein is Phenylalanine--tRNA ligase beta subunit.